The following is an 85-amino-acid chain: Large ribosomal subunit protein bL27 (85 aa).

A disordered region spans residues 1–22 (MAHKKAGGSTKNGRDSESKRLG).

It belongs to the bacterial ribosomal protein bL27 family.

This is Large ribosomal subunit protein bL27 from Alteromonas mediterranea (strain DSM 17117 / CIP 110805 / LMG 28347 / Deep ecotype).